The sequence spans 294 residues: Beta-lactamase (294 aa).

An N-terminal signal peptide occupies residues 1–30 (MKHSSLRRSLLLAGITLPLVSFALPAWANA). Serine 75 serves as the catalytic Acyl-ester intermediate. 239-241 (KTG) contributes to the substrate binding site.

It belongs to the class-A beta-lactamase family.

It carries out the reaction a beta-lactam + H2O = a substituted beta-amino acid. The polypeptide is Beta-lactamase (blaA) (Yersinia enterocolitica).